Consider the following 938-residue polypeptide: Translation initiation factor IF-2 (938 aa).

Residues 55–322 (KAEASAAPAA…RKSKRARRQE (268 aa)) form a disordered region. Composition is skewed to low complexity over residues 57 to 68 (EASAAPAAPAEK) and 77 to 117 (KKAA…AAAP). Over residues 118–136 (KPGPKPAPVAEQPAPPAEP) the composition is skewed to pro residues. 3 stretches are compositionally biased toward low complexity: residues 141–153 (APEAPAASAAPAA), 180–198 (GMGRRPAPGAPAAPGAGDN), and 224–233 (MMPKSPSAFG). The segment covering 247 to 293 (PGRGGAPGRGGAPGRGGVGTGAPGRGGAPGGGFGPSGGGRPGGGRPG) has biased composition (gly residues). Over residues 310-319 (RRGRKSKRAR) the composition is skewed to basic residues. Residues 431 to 603 (ARPPVVTVMG…VVLTADASLD (173 aa)) enclose the tr-type G domain. Residues 440–447 (GHVDHGKT) form a G1 region. 440 to 447 (GHVDHGKT) serves as a coordination point for GTP. The tract at residues 465–469 (GITQH) is G2. The segment at 490-493 (DTPG) is G3. Residues 490–494 (DTPGH) and 544–547 (NKID) contribute to the GTP site. The segment at 544-547 (NKID) is G4. Residues 580–582 (SAK) are G5.

This sequence belongs to the TRAFAC class translation factor GTPase superfamily. Classic translation factor GTPase family. IF-2 subfamily.

The protein localises to the cytoplasm. Functionally, one of the essential components for the initiation of protein synthesis. Protects formylmethionyl-tRNA from spontaneous hydrolysis and promotes its binding to the 30S ribosomal subunits. Also involved in the hydrolysis of GTP during the formation of the 70S ribosomal complex. The polypeptide is Translation initiation factor IF-2 (Nocardioides sp. (strain ATCC BAA-499 / JS614)).